A 231-amino-acid polypeptide reads, in one-letter code: Cilia- and flagella-associated protein 299 (231 aa).

Its subcellular location is the cytoplasm. The protein localises to the nucleus. Its function is as follows. May be involved in spermatogenesis. The polypeptide is Cilia- and flagella-associated protein 299 (Bos taurus (Bovine)).